An 829-amino-acid chain; its full sequence is Dipeptidyl peptidase family member 2 (829 aa).

Residues 1-27 are Cytoplasmic-facing; that stretch reads MENDNYDVEEQGCSVFNGKHGYFARSC. A helical; Signal-anchor for type II membrane protein membrane pass occupies residues 28–48; the sequence is CVVFILIICVIFVFSVIFTFM. At 49–829 the chain is on the extracellular side; sequence QNPINLNSDN…DCFKSNLDLL (781 aa). Residues Asn-61, Asn-66, Asn-183, Asn-209, Asn-314, and Asn-359 are each glycosylated (N-linked (GlcNAc...) asparagine). The cysteines at positions 514 and 533 are disulfide-linked. Ser-691 functions as the Charge relay system in the catalytic mechanism. Residues Cys-711 and Cys-821 are joined by a disulfide bond. Residue Asn-754 is glycosylated (N-linked (GlcNAc...) asparagine). Active-site charge relay system residues include Asp-768 and His-800.

It belongs to the peptidase S9B family. DPPIV subfamily.

It is found in the cell membrane. Removes N-terminal dipeptides sequentially from polypeptides. Essential for control of distal tip cell migration. The sequence is that of Dipeptidyl peptidase family member 2 (dpf-2) from Caenorhabditis elegans.